A 401-amino-acid polypeptide reads, in one-letter code: Exodeoxyribonuclease 7 large subunit (401 aa).

Belongs to the XseA family. As to quaternary structure, heterooligomer composed of large and small subunits.

Its subcellular location is the cytoplasm. The catalysed reaction is Exonucleolytic cleavage in either 5'- to 3'- or 3'- to 5'-direction to yield nucleoside 5'-phosphates.. In terms of biological role, bidirectionally degrades single-stranded DNA into large acid-insoluble oligonucleotides, which are then degraded further into small acid-soluble oligonucleotides. The polypeptide is Exodeoxyribonuclease 7 large subunit (Thermoanaerobacter sp. (strain X514)).